The sequence spans 118 residues: Succinate dehydrogenase assembly factor 1, mitochondrial (118 aa).

Positions 14 to 16 (LYR) match the LYR motif 1; required for interaction with HSC20 motif. An LYR motif 2; not required for interaction with HSC20 motif is present at residues 53–55 (LYR). The segment at 53-65 (LYRRGRRQLQLLR) is interaction with SDHB. Positions 68 to 118 (HATAMGTFVRPRGPAEEPGDATAPGTRLDDGGAPKNSCEDTGARETRSDGR) are disordered. Positions 94–118 (RLDDGGAPKNSCEDTGARETRSDGR) are enriched in basic and acidic residues.

The protein belongs to the complex I LYR family. SDHAF1 subfamily. In terms of assembly, interacts with SDHB within an SDHA-SDHB subcomplex. Also interacts with the iron-sulfur transfer complex formed by HSC20, HSPA9 and ISCU through direct binding to HSC20. Binding of SDHAF1 to SDHB precedes and is necessary for recruitment of the iron-sulfur transfer complex by SDHAF1.

It localises to the mitochondrion matrix. Plays an essential role in the assembly of succinate dehydrogenase (SDH), an enzyme complex (also referred to as respiratory complex II) that is a component of both the tricarboxylic acid (TCA) cycle and the mitochondrial electron transport chain, and which couples the oxidation of succinate to fumarate with the reduction of ubiquinone (coenzyme Q) to ubiquinol. Promotes maturation of the iron-sulfur protein subunit Sdhb of the SDH catalytic dimer, protecting it from the deleterious effects of oxidants. May act together with SDHAF3. Contributes to iron-sulfur cluster incorporation into SDHB by binding to SDHB and recruiting the iron-sulfur transfer complex formed by HSC20, HSPA9 and ISCU through direct binding to HSC20. The polypeptide is Succinate dehydrogenase assembly factor 1, mitochondrial (Mus musculus (Mouse)).